The following is a 205-amino-acid chain: Ephrin-A1 (205 aa).

The first 18 residues, 1-18 (MEFFWASLLGLCCSLAAA), serve as a signal peptide directing secretion. Positions 19–151 (NRHTVFWNSS…RLKVMIAGKI (133 aa)) constitute an Ephrin RBD domain. Asn-26 is a glycosylation site (N-linked (GlcNAc...) asparagine). 2 disulfides stabilise this stretch: Cys-51/Cys-92 and Cys-80/Cys-140. Ser-182 carries GPI-anchor amidated serine lipidation. The propeptide at 183–205 (AAPRLFPLAWAVLLLPFLLLQIP) is removed in mature form.

The protein belongs to the ephrin family. In terms of assembly, monomer. Homodimer. Forms heterodimers with EPHA2. Binds to the receptor tyrosine kinases EPHA2, EPHA3, EPHA4, EPHA5, EPHA6 and EPHA7. Also binds with low affinity to EPHA1. In terms of processing, undergoes proteolysis by a metalloprotease to give rise to a soluble monomeric form. N-Glycosylation is required for binding to EPHA2 receptor and inducing its internalization.

The protein localises to the cell membrane. It localises to the secreted. Cell surface GPI-bound ligand for Eph receptors, a family of receptor tyrosine kinases which are crucial for migration, repulsion and adhesion during neuronal, vascular and epithelial development. Binds promiscuously Eph receptors residing on adjacent cells, leading to contact-dependent bidirectional signaling into neighboring cells. Plays an important role in angiogenesis and tumor neovascularization. The recruitment of VAV2, VAV3 and PI3-kinase p85 subunit by phosphorylated EPHA2 is critical for EFNA1-induced RAC1 GTPase activation and vascular endothelial cell migration and assembly. Exerts anti-oncogenic effects in tumor cells through activation and down-regulation of EPHA2. Activates EPHA2 by inducing tyrosine phosphorylation which leads to its internalization and degradation. Acts as a negative regulator in the tumorigenesis of gliomas by down-regulating EPHA2 and FAK. Can evoke collapse of embryonic neuronal growth cone and regulates dendritic spine morphogenesis. In Bos taurus (Bovine), this protein is Ephrin-A1 (EFNA1).